Consider the following 454-residue polypeptide: 3-phosphoshikimate 1-carboxyvinyltransferase (454 aa).

3-phosphoshikimate is bound by residues lysine 39, serine 40, and arginine 44. Position 39 (lysine 39) interacts with phosphoenolpyruvate. The phosphoenolpyruvate site is built by glycine 112 and arginine 140. 4 residues coordinate 3-phosphoshikimate: serine 185, glutamine 187, aspartate 333, and lysine 360. Residue glutamine 187 coordinates phosphoenolpyruvate. Aspartate 333 functions as the Proton acceptor in the catalytic mechanism. Phosphoenolpyruvate contacts are provided by arginine 364 and arginine 405.

Belongs to the EPSP synthase family. As to quaternary structure, monomer.

Its subcellular location is the cytoplasm. The enzyme catalyses 3-phosphoshikimate + phosphoenolpyruvate = 5-O-(1-carboxyvinyl)-3-phosphoshikimate + phosphate. The protein operates within metabolic intermediate biosynthesis; chorismate biosynthesis; chorismate from D-erythrose 4-phosphate and phosphoenolpyruvate: step 6/7. Functionally, catalyzes the transfer of the enolpyruvyl moiety of phosphoenolpyruvate (PEP) to the 5-hydroxyl of shikimate-3-phosphate (S3P) to produce enolpyruvyl shikimate-3-phosphate and inorganic phosphate. The chain is 3-phosphoshikimate 1-carboxyvinyltransferase from Xylella fastidiosa (strain 9a5c).